A 361-amino-acid chain; its full sequence is Chorismate synthase (361 aa).

NADP(+)-binding residues include R48 and R54. Residues 125–127 (RSS), 238–239 (NA), G278, 293–297 (KPTSS), and R319 contribute to the FMN site.

Belongs to the chorismate synthase family. In terms of assembly, homotetramer. It depends on FMNH2 as a cofactor.

The catalysed reaction is 5-O-(1-carboxyvinyl)-3-phosphoshikimate = chorismate + phosphate. It functions in the pathway metabolic intermediate biosynthesis; chorismate biosynthesis; chorismate from D-erythrose 4-phosphate and phosphoenolpyruvate: step 7/7. Catalyzes the anti-1,4-elimination of the C-3 phosphate and the C-6 proR hydrogen from 5-enolpyruvylshikimate-3-phosphate (EPSP) to yield chorismate, which is the branch point compound that serves as the starting substrate for the three terminal pathways of aromatic amino acid biosynthesis. This reaction introduces a second double bond into the aromatic ring system. This Escherichia coli O139:H28 (strain E24377A / ETEC) protein is Chorismate synthase.